Here is a 265-residue protein sequence, read N- to C-terminus: 4-hydroxy-tetrahydrodipicolinate reductase (265 aa).

NAD(+)-binding positions include 9-14 (GALGRM), 100-102 (GTT), and 124-127 (SPNM). His-158 acts as the Proton donor/acceptor in catalysis. His-159 serves as a coordination point for (S)-2,3,4,5-tetrahydrodipicolinate. Residue Lys-162 is the Proton donor of the active site. 168 to 169 (GT) is a binding site for (S)-2,3,4,5-tetrahydrodipicolinate.

The protein belongs to the DapB family.

Its subcellular location is the cytoplasm. The enzyme catalyses (S)-2,3,4,5-tetrahydrodipicolinate + NAD(+) + H2O = (2S,4S)-4-hydroxy-2,3,4,5-tetrahydrodipicolinate + NADH + H(+). It carries out the reaction (S)-2,3,4,5-tetrahydrodipicolinate + NADP(+) + H2O = (2S,4S)-4-hydroxy-2,3,4,5-tetrahydrodipicolinate + NADPH + H(+). It functions in the pathway amino-acid biosynthesis; L-lysine biosynthesis via DAP pathway; (S)-tetrahydrodipicolinate from L-aspartate: step 4/4. Functionally, catalyzes the conversion of 4-hydroxy-tetrahydrodipicolinate (HTPA) to tetrahydrodipicolinate. The sequence is that of 4-hydroxy-tetrahydrodipicolinate reductase from Aquifex aeolicus (strain VF5).